The following is a 237-amino-acid chain: uncharacterized protein (237 aa).

A helical transmembrane segment spans residues 53-70 (LIFLATVLAGLILFYFGV). The segment at 85 to 155 (PPIVIKPVAP…TQEKKDVKVA (71 aa)) is disordered. The stretch at 98 to 157 (KTQESNQTTKKEVKQEEQKKEEPKKMVQKQETQEKREVKKSEKNEVKQTQEKKDVKVAKK) forms a coiled coil. Basic and acidic residues-rich tracts occupy residues 106–122 (TKKE…EPKK) and 128–155 (ETQE…VKVA). The region spanning 165-237 (AANLRTYKFQ…HFKDAIFVRK (73 aa)) is the SPOR domain.

The protein localises to the membrane. This is an uncharacterized protein from Aquifex aeolicus (strain VF5).